The sequence spans 782 residues: LPS-assembly protein LptD (782 aa).

The N-terminal stretch at 1–24 (MKKNSYTRLSIAILSTLYSVSSLA) is a signal peptide.

Belongs to the LptD family. Component of the lipopolysaccharide transport and assembly complex. Interacts with LptE and LptA.

The protein resides in the cell outer membrane. Together with LptE, is involved in the assembly of lipopolysaccharide (LPS) at the surface of the outer membrane. In Pasteurella multocida (strain Pm70), this protein is LPS-assembly protein LptD.